The chain runs to 212 residues: Pyridoxine/pyridoxamine 5'-phosphate oxidase (212 aa).

Substrate contacts are provided by residues 8–11 and K66; that span reads RREY. Residues 61–66, 76–77, R82, K83, and Q105 contribute to the FMN site; these read RIVLLK and FT. Residues Y123, R127, and S131 each coordinate substrate. FMN-binding positions include 140-141 and W185; that span reads QS. 191–193 serves as a coordination point for substrate; sequence RLH. R195 contributes to the FMN binding site.

The protein belongs to the pyridoxamine 5'-phosphate oxidase family. As to quaternary structure, homodimer. FMN is required as a cofactor.

It carries out the reaction pyridoxamine 5'-phosphate + O2 + H2O = pyridoxal 5'-phosphate + H2O2 + NH4(+). The enzyme catalyses pyridoxine 5'-phosphate + O2 = pyridoxal 5'-phosphate + H2O2. Its pathway is cofactor metabolism; pyridoxal 5'-phosphate salvage; pyridoxal 5'-phosphate from pyridoxamine 5'-phosphate: step 1/1. It participates in cofactor metabolism; pyridoxal 5'-phosphate salvage; pyridoxal 5'-phosphate from pyridoxine 5'-phosphate: step 1/1. In terms of biological role, catalyzes the oxidation of either pyridoxine 5'-phosphate (PNP) or pyridoxamine 5'-phosphate (PMP) into pyridoxal 5'-phosphate (PLP). The sequence is that of Pyridoxine/pyridoxamine 5'-phosphate oxidase from Shewanella sp. (strain ANA-3).